The following is a 343-amino-acid chain: Heat-inducible transcription repressor HrcA (343 aa).

The protein belongs to the HrcA family.

In terms of biological role, negative regulator of class I heat shock genes (grpE-dnaK-dnaJ and groELS operons). Prevents heat-shock induction of these operons. The polypeptide is Heat-inducible transcription repressor HrcA (Bacillus pumilus (strain SAFR-032)).